The chain runs to 423 residues: Cyclin-dependent kinase 14 (423 aa).

Phosphoserine is present on residues Ser32, Ser49, and Ser88. The segment covering Ser49–Lys64 has biased composition (polar residues). The disordered stretch occupies residues Ser49–Asp87. A Protein kinase domain is found at Tyr89–Phe373. Residues Leu95–Val103 and Lys118 each bind ATP. Asp210 serves as the catalytic Proton acceptor. Residues Glu403–His423 form a disordered region. Residues Lys410–His423 show a composition bias toward polar residues.

Belongs to the protein kinase superfamily. CMGC Ser/Thr protein kinase family. CDC2/CDKX subfamily. In terms of assembly, found in a complex with LRP6, CCNY and CAPRIN2 during G2/M stage; CAPRIN2 functions as a scaffold for the complex by binding to CCNY via its N terminus and to CDK14 via its C terminus. Interacts with CCNY; CCNY mediates its recruitment to the plasma membrane and promotes phosphorylation of LRP6. Interacts with CCDN3 and CDKN1A. Interacts with SEPT8. Interacts with 14-3-3 proteina YWHAB, YWHAE, YWHAH and YWHAQ.

Its subcellular location is the cell membrane. The protein localises to the cytoplasm. It is found in the nucleus. The enzyme catalyses L-seryl-[protein] + ATP = O-phospho-L-seryl-[protein] + ADP + H(+). The catalysed reaction is L-threonyl-[protein] + ATP = O-phospho-L-threonyl-[protein] + ADP + H(+). Its activity is regulated as follows. Serine/threonine-protein kinase activity is promoted by associated cyclins CCDN3 and CCNY and repressed by CDKN1A. Its function is as follows. Serine/threonine-protein kinase involved in the control of the eukaryotic cell cycle, whose activity is controlled by an associated cyclin. Acts as a cell-cycle regulator of Wnt signaling pathway during G2/M phase by mediating the phosphorylation of LRP6 at 'Ser-1490', leading to the activation of the Wnt signaling pathway. Acts as a regulator of cell cycle progression and cell proliferation via its interaction with CCDN3. Phosphorylates RB1 in vitro, however the relevance of such result remains to be confirmed in vivo. May also play a role in meiosis, neuron differentiation and may indirectly act as a negative regulator of insulin-responsive glucose transport. This Callithrix jacchus (White-tufted-ear marmoset) protein is Cyclin-dependent kinase 14 (CDK14).